Reading from the N-terminus, the 462-residue chain is MQEGKISQIIGPVVDVDFPEGQLPSILDALTVTRQDGSKLVLETQQHLGEERVRTISMEGTDGLVRGMSVANTGRPIQAPVGAEVLGRMLNVVGEPIDGKGPVPSKKSYPIHRSAPKFDELSTKAEMFETGIKVIDLLEPYSRGGKTGLFGGAGVGKTVLIMELINNIAKEQSGYSVFAGVGERTREGNDLWHEMMESGVIDKTALVFGQMNEPPGARARVALTGLSIAEYFRDEEGRDVLLFIDNIFRFTQAGAEVSALLGRMPSAVGYQPTLGTEMGELQDRIVSTKKGSVTSVQAIYVPADDLTDPAPATAFTHLDATTVLSRQIAELGIYPAVDPLDSTSRILDPNIIGNDHYDTAQAVKQILQRYKDLQDIIAILGMDELSDEDKLVVARARKVQRFLSQPFFVAEAFTGLAGKYVKLEDTIKGFKEIIAGKHDSLPENAFYLVGTIEEAVEKAKKL.

151-158 (GGAGVGKT) contacts ATP.

Belongs to the ATPase alpha/beta chains family. As to quaternary structure, F-type ATPases have 2 components, CF(1) - the catalytic core - and CF(0) - the membrane proton channel. CF(1) has five subunits: alpha(3), beta(3), gamma(1), delta(1), epsilon(1). CF(0) has three main subunits: a(1), b(2) and c(9-12). The alpha and beta chains form an alternating ring which encloses part of the gamma chain. CF(1) is attached to CF(0) by a central stalk formed by the gamma and epsilon chains, while a peripheral stalk is formed by the delta and b chains.

The protein resides in the cell inner membrane. It catalyses the reaction ATP + H2O + 4 H(+)(in) = ADP + phosphate + 5 H(+)(out). In terms of biological role, produces ATP from ADP in the presence of a proton gradient across the membrane. The catalytic sites are hosted primarily by the beta subunits. The chain is ATP synthase subunit beta from Chlorobaculum parvum (strain DSM 263 / NCIMB 8327) (Chlorobium vibrioforme subsp. thiosulfatophilum).